A 120-amino-acid polypeptide reads, in one-letter code: Holo-[acyl-carrier-protein] synthase (120 aa).

Aspartate 8 and glutamate 60 together coordinate Mg(2+).

It belongs to the P-Pant transferase superfamily. AcpS family. Mg(2+) serves as cofactor.

Its subcellular location is the cytoplasm. It carries out the reaction apo-[ACP] + CoA = holo-[ACP] + adenosine 3',5'-bisphosphate + H(+). Functionally, transfers the 4'-phosphopantetheine moiety from coenzyme A to a Ser of acyl-carrier-protein. This is Holo-[acyl-carrier-protein] synthase from Anaplasma marginale (strain St. Maries).